A 1216-amino-acid chain; its full sequence is Apical endosomal glycoprotein (1216 aa).

The N-terminal stretch at 1–21 (MCLPSCLLSIWVLFMAAQSLG) is a signal peptide. At 22 to 1155 (KTWVPDHCRS…SQGRVAAPVS (1134 aa)) the chain is on the extracellular side. The LDL-receptor class A 1; truncated domain occupies 27 to 54 (DHCRSPTEATCNFVCDCGDCSDEAQCGF). Residues 62–224 (NTPFTCNFEQ…DDMEFWDCGL (163 aa)) form the MAM 1 domain. Asn205 is a glycosylation site (N-linked (GlcNAc...) asparagine). The LDL-receptor class A 2 domain occupies 229–269 (ARCPLGHHHCQNKACVEPHQLCDGEDNCGDSSDEDPLICSH). Cystine bridges form between Cys231–Cys243, Cys238–Cys256, and Cys250–Cys267. Positions 268 to 427 (SHHMATDFET…DLIMSNHCIL (160 aa)) constitute an MAM 2 domain. N-linked (GlcNAc...) asparagine glycans are attached at residues Asn291, Asn341, and Asn368. Residues 454–491 (RTCDAGHLSCDELCVPPEQLCDFQQHCAEGEDEEKCGT) form the LDL-receptor class A 3 domain. 3 disulfide bridges follow: Cys456–Cys467, Cys463–Cys480, and Cys474–Cys489. MAM domains follow at residues 492 to 647 (TDFE…DCNP), 654 to 813 (DQEV…PCWA), 812 to 973 (WAAK…PCAQ), and 972 to 1142 (AQPG…HCKQ). N-linked (GlcNAc...) asparagine glycosylation occurs at Asn639. The N-linked (GlcNAc...) asparagine glycan is linked to Asn839. A helical transmembrane segment spans residues 1156 to 1176 (VPVAVGGALLLFLLLLGLGGW). Topologically, residues 1177 to 1216 (HWLQKQHLPCQSTDAAASGFDNILFNADQVTLPESITSNP) are cytoplasmic.

In terms of tissue distribution, apical endosomal tubules of developing rat intestinal epithelial cells.

The protein resides in the membrane. Functionally, probably involved in the sorting and selective transport of receptors and ligands across polarized epithelia. The chain is Apical endosomal glycoprotein (Mamdc4) from Rattus norvegicus (Rat).